We begin with the raw amino-acid sequence, 206 residues long: Endoribonuclease YbeY (206 aa).

The disordered stretch occupies residues methionine 1–histidine 20. Residues histidine 168, histidine 172, and histidine 178 each contribute to the Zn(2+) site.

The protein belongs to the endoribonuclease YbeY family. It depends on Zn(2+) as a cofactor.

The protein resides in the cytoplasm. Its function is as follows. Single strand-specific metallo-endoribonuclease involved in late-stage 70S ribosome quality control and in maturation of the 3' terminus of the 16S rRNA. This Psychrobacter arcticus (strain DSM 17307 / VKM B-2377 / 273-4) protein is Endoribonuclease YbeY.